Consider the following 435-residue polypeptide: UDP-N-acetylmuramate--L-alanine ligase (435 aa).

108–114 (GAHGKST) is a binding site for ATP.

The protein belongs to the MurCDEF family.

Its subcellular location is the cytoplasm. The enzyme catalyses UDP-N-acetyl-alpha-D-muramate + L-alanine + ATP = UDP-N-acetyl-alpha-D-muramoyl-L-alanine + ADP + phosphate + H(+). It functions in the pathway cell wall biogenesis; peptidoglycan biosynthesis. Its function is as follows. Cell wall formation. This chain is UDP-N-acetylmuramate--L-alanine ligase, found in Campylobacter curvus (strain 525.92).